Here is a 413-residue protein sequence, read N- to C-terminus: Serine--tRNA ligase (413 aa).

221-223 (TAE) lines the L-serine pocket. Position 252 to 254 (252 to 254 (RRE)) interacts with ATP. Glu275 is an L-serine binding site. Position 339 to 342 (339 to 342 (EVSS)) interacts with ATP. L-serine is bound at residue Ser375.

The protein belongs to the class-II aminoacyl-tRNA synthetase family. Type-1 seryl-tRNA synthetase subfamily. In terms of assembly, homodimer. The tRNA molecule binds across the dimer.

It is found in the cytoplasm. It catalyses the reaction tRNA(Ser) + L-serine + ATP = L-seryl-tRNA(Ser) + AMP + diphosphate + H(+). It carries out the reaction tRNA(Sec) + L-serine + ATP = L-seryl-tRNA(Sec) + AMP + diphosphate + H(+). Its pathway is aminoacyl-tRNA biosynthesis; selenocysteinyl-tRNA(Sec) biosynthesis; L-seryl-tRNA(Sec) from L-serine and tRNA(Sec): step 1/1. In terms of biological role, catalyzes the attachment of serine to tRNA(Ser). Is also able to aminoacylate tRNA(Sec) with serine, to form the misacylated tRNA L-seryl-tRNA(Sec), which will be further converted into selenocysteinyl-tRNA(Sec). In Dehalococcoides mccartyi (strain ATCC BAA-2100 / JCM 16839 / KCTC 5957 / BAV1), this protein is Serine--tRNA ligase.